We begin with the raw amino-acid sequence, 2135 residues long: Plexin-B1 (2135 aa).

The N-terminal stretch at 1 to 19 (MPALGPALLQALWAGWVLT) is a signal peptide. One can recognise a Sema domain in the interval 20 to 479 (LQPLPPTAFT…TQSTLLKVPV (460 aa)). Over 20–1490 (LQPLPPTAFT…SPGAFPVAAQ (1471 aa)) the chain is Extracellular. N31 carries an N-linked (GlcNAc...) asparagine glycan. Cystine bridges form between C79-C88, C111-C119, C252-C377, C268-C322, C340-C364, C482-C499, C488-C533, C491-C508, and C502-C514. Residue N334 is glycosylated (N-linked (GlcNAc...) asparagine). N-linked (GlcNAc...) asparagine glycosylation is present at N543. C570 and C588 are oxidised to a cystine. 2 disordered regions span residues 671–829 (MVAS…TTFP) and 849–884 (LPEA…PPAP). Residues 681–697 (SPDPPARGGPSPSPPTA) show a composition bias toward pro residues. 2 stretches are compositionally biased toward low complexity: residues 698–710 (PKAL…DTLP) and 734–754 (SPWG…TGSP). 3 IPT/TIG domains span residues 1070-1160 (PLIH…FAYQ), 1162-1249 (PKVH…FKYT), and 1252-1375 (PNIT…FSYE). 3 N-linked (GlcNAc...) asparagine glycosylation sites follow: N1183, N1253, and N1330. A helical membrane pass occupies residues 1491 to 1511 (VGLGVGTSLLALGVIIIVLMY). Positions 1507–1539 (IVLMYRRKSKQALRDYKKVQIQLENLESSVRDR) form a coiled coil. Residues 1512–2135 (RRKSKQALRD…AAVENKVTDL (624 aa)) are Cytoplasmic-facing. Residues 1883 to 1908 (PWHLVKPSDEPEPPRPRRGSLRGGER) form a disordered region. Residues 1888-1897 (KPSDEPEPPR) are compositionally biased toward basic and acidic residues.

Belongs to the plexin family. Monomer, and heterodimer with PLXNB2 after proteolytic processing. Binds RAC1 that has been activated by GTP binding. Interaction with SEMA4D promotes binding of cytoplasmic ligands. Interacts with PLXNA1. Interacts with ARHGEF11 and ARHGEF12. Interacts with ERBB2. Interacts with MET. Interacts with MST1R. Interacts with RRAS. Interacts with RHOD. Interacts with RND1. Interacts with NRP1 and NRP2. Phosphorylated on tyrosine residues by ERBB2 and MET upon SEMA4D binding. In terms of processing, proteolytic processing favors heterodimerization with PLXNB2 and SEMA4D binding. As to expression, highly expressed in fetal kidney, and at slightly lower levels in fetal brain, lung and liver.

Its subcellular location is the cell membrane. It localises to the secreted. Receptor for SEMA4D. Plays a role in GABAergic synapse development. Mediates SEMA4A- and SEMA4D-dependent inhibitory synapse development. Plays a role in RHOA activation and subsequent changes of the actin cytoskeleton. Plays a role in axon guidance, invasive growth and cell migration. This is Plexin-B1 (PLXNB1) from Homo sapiens (Human).